A 170-amino-acid polypeptide reads, in one-letter code: Probable T4-type lysozyme 2 (170 aa).

E13 (proton donor) is an active-site residue. D22 acts as the Nucleophile in catalysis.

This sequence belongs to the glycosyl hydrolase 24 family.

It catalyses the reaction Hydrolysis of (1-&gt;4)-beta-linkages between N-acetylmuramic acid and N-acetyl-D-glucosamine residues in a peptidoglycan and between N-acetyl-D-glucosamine residues in chitodextrins.. This is Probable T4-type lysozyme 2 from Dictyostelium discoideum (Social amoeba).